Consider the following 348-residue polypeptide: D-alanine--D-alanine ligase (348 aa).

The ATP-grasp domain occupies 132–334 (KRVLESAGIP…YAELIEELVR (203 aa)). 162–217 (EAALSYPVFVKPANMGSSVGISKAESEEELRAAILLALTYDSRILIEQGVLAREIE) serves as a coordination point for ATP. Residues Asp-288, Glu-301, and Asn-303 each coordinate Mg(2+).

This sequence belongs to the D-alanine--D-alanine ligase family. Mg(2+) serves as cofactor. It depends on Mn(2+) as a cofactor.

It is found in the cytoplasm. It catalyses the reaction 2 D-alanine + ATP = D-alanyl-D-alanine + ADP + phosphate + H(+). The protein operates within cell wall biogenesis; peptidoglycan biosynthesis. Functionally, cell wall formation. The polypeptide is D-alanine--D-alanine ligase (Streptococcus equi subsp. zooepidemicus (strain H70)).